We begin with the raw amino-acid sequence, 315 residues long: Protein-L-isoaspartate O-methyltransferase (315 aa).

Disordered stretches follow at residues 1-47 (MSGE…KPAA) and 59-89 (RALPGTTAAKPATAPKPNLLKPAMPQPAAPK). The span at 14–34 (EDLKRAPRKSEVRSGSGERHA) shows a compositional bias: basic and acidic residues. Composition is skewed to low complexity over residues 35 to 47 (ASAVPKAADKPAA) and 59 to 81 (RALPGTTAAKPATAPKPNLLKPA). Residue Ser162 is part of the active site.

This sequence belongs to the methyltransferase superfamily. L-isoaspartyl/D-aspartyl protein methyltransferase family.

The protein localises to the cytoplasm. The enzyme catalyses [protein]-L-isoaspartate + S-adenosyl-L-methionine = [protein]-L-isoaspartate alpha-methyl ester + S-adenosyl-L-homocysteine. In terms of biological role, catalyzes the methyl esterification of L-isoaspartyl residues in peptides and proteins that result from spontaneous decomposition of normal L-aspartyl and L-asparaginyl residues. It plays a role in the repair and/or degradation of damaged proteins. This chain is Protein-L-isoaspartate O-methyltransferase, found in Burkholderia ambifaria (strain MC40-6).